The primary structure comprises 428 residues: CinA-like protein (428 aa).

This sequence belongs to the CinA family.

The polypeptide is CinA-like protein (Chlorobium phaeovibrioides (strain DSM 265 / 1930) (Prosthecochloris vibrioformis (strain DSM 265))).